The following is a 281-amino-acid chain: 3'-5' exonuclease Snipper (281 aa).

Residues 19–52 are disordered; that stretch reads DGARPDPNNDPEESFNEDEVTEANSVPAKSKKSR. Residues 27-39 show a composition bias toward acidic residues; it reads NDPEESFNEDEVT. Residues 64–262 enclose the Exonuclease domain; that stretch reads YVIAVDFEAT…MCKMVRDGAL (199 aa). Mg(2+)-binding residues include Asp69 and Glu71. Residue Glu71 is the Proton acceptor of the active site. Glu71 and Ala72 together coordinate AMP. A Mg(2+)-binding site is contributed by Asp183. His240 (proton acceptor) is an active-site residue. His240 is an AMP binding site. Mg(2+) is bound at residue Asp245.

This sequence belongs to the ERI2 family. The cofactor is Mg(2+).

The protein localises to the cytoplasm. It is found in the nucleus. Its subcellular location is the nucleolus. Functionally, a broad-specificity exonuclease, capable of degrading both structure-specific DNA and RNA targets without sequence specificity in vitro. Requires two to five unpaired nucleotides in the 3' region for efficient binding and nuclease activity. Binds with higher affinity to RNA and DNA stem-loop substrates compared to single-stranded substrate. Binds to the 3'-end of histone mRNAs and degrades them, suggesting that it might play a role in histone mRNA decay after replication. Can readily cleave the histone stem-loop RNA beyond the -12 (UUU) position in the loop to produce -14 and then -16 oligonucleotide fragments for both the stem-loop and the reverse stem-loop. Cleaves both the single-stranded 3' flank as well as the double-stranded stem portion of histone stem-loop RNA. Might affect histone mRNA 3' processing thereby regulating histone protein expression. Has an important role in development and tissue formation. Might have a role in 5.8S rRNA precursor processing. This chain is 3'-5' exonuclease Snipper, found in Drosophila melanogaster (Fruit fly).